The sequence spans 192 residues: MAQMYFYYSAMNAGKSTTLLQSAFNYQERGMNPLIFTAAIDDRFGVGKVSSRIGLEAEAHLFHADTDLLHVIATLHEAEPRHCILMDECQFLSKEQVYQLTEVVDKLDIPVLCYGLRTDFLGELFEGSKYLLSWADKLIELKTICHCGRKANMVIRTDEHGNAISEGDQVAIGGNDKYVSVCRQHYKEALGR.

ATP is bound by residues 9 to 16 and 87 to 90; these read SAMNAGKS and DECQ. Glu88 acts as the Proton acceptor in catalysis. 4 residues coordinate Zn(2+): Cys145, Cys147, Cys182, and His185.

Belongs to the thymidine kinase family. In terms of assembly, homotetramer.

It is found in the cytoplasm. The catalysed reaction is thymidine + ATP = dTMP + ADP + H(+). In Vibrio cholerae serotype O1 (strain ATCC 39315 / El Tor Inaba N16961), this protein is Thymidine kinase.